The chain runs to 249 residues: Acidic leucine-rich nuclear phosphoprotein 32 family member A (249 aa).

Thr15 is subject to Phosphothreonine. A Phosphoserine modification is found at Ser17. 4 LRR repeats span residues 18–41, 43–64, 65–87, and 89–110; these read DVKE…TDEF, ELEF…PKLN, KLKK…AEKC, and NLTH…EPLK. The 39-residue stretch at 123–161 folds into the LRRCT domain; it reads CEVTNLNDYRENVFKLLPQLTYLDGYDRDDKEAPDSDAE. Positions 147 to 156 are enriched in basic and acidic residues; the sequence is GYDRDDKEAP. Residues 147-249 are disordered; that stretch reads GYDRDDKEAP…EPXDXGEDDD (103 aa). The necessary for tumor-suppressive function stretch occupies residues 150–174; it reads RDDKEAPDSDAEGYVEGLDDDEEDE. Residues 157–230 show a composition bias toward acidic residues; it reads DSDAEGYVEG…DEEDEEDVGE (74 aa). A phosphoserine mark is found at Ser158 and Ser204. Positions 165–249 are interaction with E4F1; it reads EGLDDDEEDE…EPXDXGEDDD (85 aa).

This sequence belongs to the ANP32 family. As to quaternary structure, component of the SET complex, composed of at least ANP32A, APEX1, HMGB2, NME1, SET and TREX1. Directly interacts with SET. Interacts with ATXN1/SCA1. Interacts with MAP1B. Interacts with ELAVL1. Part of the INHAT (inhibitor of histone acetyltransferases) complex. Interacts with E4F1. Post-translationally, phosphorylated on serine residues, at least in part by casein kinase 2/CK2. In terms of processing, some glutamate residues are glycylated by TTLL8. This modification occurs exclusively on glutamate residues and results in a glycine chain on the gamma-carboxyl group.

It is found in the nucleus. Its subcellular location is the cytoplasm. The protein resides in the endoplasmic reticulum. Its function is as follows. Multifunctional protein that is involved in the regulation of many processes including tumor suppression, apoptosis, cell cycle progression or transcription. Promotes apoptosis by favouring the activation of caspase-9/CASP9 and allowing apoptosome formation. In addition, plays a role in the modulation of histone acetylation and transcription as part of the INHAT (inhibitor of histone acetyltransferases) complex. Inhibits the histone-acetyltranferase activity of EP300/CREBBP (CREB-binding protein) and EP300/CREBBP-associated factor by histone masking. Preferentially binds to unmodified histone H3 and sterically inhibiting its acetylation and phosphorylation leading to cell growth inhibition. Participates in other biochemical processes such as regulation of mRNA nuclear-to-cytoplasmic translocation and stability by its association with ELAVL1 (Hu-antigen R). Plays a role in E4F1-mediated transcriptional repression as well as inhibition of protein phosphatase 2A. This is Acidic leucine-rich nuclear phosphoprotein 32 family member A (ANP32A) from Canis lupus familiaris (Dog).